The following is a 196-amino-acid chain: Imidazoleglycerol-phosphate dehydratase (196 aa).

This sequence belongs to the imidazoleglycerol-phosphate dehydratase family.

The protein localises to the cytoplasm. The catalysed reaction is D-erythro-1-(imidazol-4-yl)glycerol 3-phosphate = 3-(imidazol-4-yl)-2-oxopropyl phosphate + H2O. The protein operates within amino-acid biosynthesis; L-histidine biosynthesis; L-histidine from 5-phospho-alpha-D-ribose 1-diphosphate: step 6/9. The chain is Imidazoleglycerol-phosphate dehydratase from Desulforamulus reducens (strain ATCC BAA-1160 / DSM 100696 / MI-1) (Desulfotomaculum reducens).